We begin with the raw amino-acid sequence, 431 residues long: Probable zinc metalloprotease Lema_P086240 (431 aa).

A glycan (N-linked (GlcNAc...) asparagine) is linked at Asn-46. Residues His-117, Asp-137, and Glu-170 each contribute to the Zn(2+) site. Asn-185 carries N-linked (GlcNAc...) asparagine glycosylation. Asp-197 contributes to the Zn(2+) binding site. N-linked (GlcNAc...) asparagine glycosylation is found at Asn-258, Asn-310, Asn-349, Asn-359, and Asn-369. Residues 344 to 431 (PGMPRNVTID…KSPAVYPFPG (88 aa)) enclose the Fibronectin type-III domain.

The protein belongs to the peptidase M28 family. M28B subfamily. Zn(2+) serves as cofactor.

Its subcellular location is the secreted. The sequence is that of Probable zinc metalloprotease Lema_P086240 from Leptosphaeria maculans (strain JN3 / isolate v23.1.3 / race Av1-4-5-6-7-8) (Blackleg fungus).